The following is a 155-amino-acid chain: MSQEQVVTELLRPIVESMGFIWWGLEYHYNSMNSILRIYVDTQEGGIGIDDIVTITEQLNPILDVEQPITTNYTLEVSSPGLDRILFTLAQCEQFIGATVHCRLRFPFEGKRKFQGIMTAVDHDKETISLTLADGAAEVHLPFTQIDKARIVPQF.

Belongs to the RimP family.

Its subcellular location is the cytoplasm. Its function is as follows. Required for maturation of 30S ribosomal subunits. The chain is Ribosome maturation factor RimP from Dichelobacter nodosus (strain VCS1703A).